A 265-amino-acid chain; its full sequence is Short-chain dehydrogenase/reductase fsr5 (265 aa).

The signal sequence occupies residues 1-32 (MASLGKYVSKLAGSRVLVIGGSSGIGFGVAEA). Residues serine 22, serine 23, isoleucine 25, serine 45, and lysine 50 each coordinate NADP(+). Asparagine 62 carries an N-linked (GlcNAc...) asparagine glycan. Residues asparagine 88, arginine 130, and threonine 204 each contribute to the NADP(+) site. 2 N-linked (GlcNAc...) asparagine glycosylation sites follow: asparagine 218 and asparagine 250.

It belongs to the short-chain dehydrogenases/reductases (SDR) family.

In terms of biological role, short-chain dehydrogenase/reductase; part of the gene cluster that mediates the biosynthesis of fusarubins, highly pigmented naphthoquinones responsible for the coloration of the fruiting bodies. The non-reducing polyketide synthase FSR1 is responsible for the condensation of seven acetyl-CoA units to yield a haptaketide. After rings A and B are formed by aldol-type cyclization, the PKS-derived product is released as 6-O-demethylfusarubinaldehyde. Then, two hydroxyl groups at C-5 and C-10 are incorporated by FSR3, and simultaneously hydroxyl groups at C-6 and C-8 are methylated by FSR2. The aldehyde is, on the one hand, reduced by FSR3 to 8-O-methylfusarubin alcohol, which equilibrates mainly with 8-O-methylfusarubin and only small amounts of 8-O-methylnectriafurone. On the other hand, the aldehyde can be oxidized to form 8-O-methylfusarubinic acid, a reaction driven by FSR3 equilibrating with 8-O-methylfusarubinlactone, finally resulting in 8-O-methylanhydrofusarubinlactol after a further reduction step and loss of water. 8-O-Methylfusarubinic acid can also undergo decarboxylation, resulting in 8-O-methyl-13-hydroxynorjavanicin after another hydroxylation step at C-13. Both steps are most likely also accomplished by FSR3. No enzymatic function has been determined so far for either FSR4 and FSR5. Their deletion does not alter the product spectrum, but the possibility that they catalyze specific enzymatic steps during perithecium development cannot be ruled out. FSR4 might possess a regulatory function in the biosynthesis of fusarubins. This chain is Short-chain dehydrogenase/reductase fsr5, found in Gibberella fujikuroi (strain CBS 195.34 / IMI 58289 / NRRL A-6831) (Bakanae and foot rot disease fungus).